Here is a 982-residue protein sequence, read N- to C-terminus: Envelope glycoprotein gp130 (982 aa).

The interval 1–15 is involved in virion budding; that stretch reads MAPPMNLQQWLLWKK. The Cytoplasmic portion of the chain corresponds to 1-65; the sequence is MAPPMNLQQW…YLAYACCATS (65 aa). Glycyl lysine isopeptide (Lys-Gly) (interchain with G-Cter in ubiquitin) cross-links involve residues K14, K15, and K34. A helical; Signal-anchor for type III membrane protein membrane pass occupies residues 66 to 88; it reads TRVMCWLFLICVLLIIVFVSCFV. Residues 89–954 are Lumenal-facing; that stretch reads TVARIQWNRD…TVSILSYAKP (866 aa). N-linked (GlcNAc...) asparagine; by host glycans are attached at residues N109, N141, N183, N309, N346, N390, N404, N412, N484, N522, and N551. Positions 570 to 592 are fusion peptide; sequence NIEKLRSMGYSLTGAVQTLSQIS. Residues N776, N802, and N827 are each glycosylated (N-linked (GlcNAc...) asparagine; by host). Residues 955–975 traverse the membrane as a helical segment; that stretch reads ILIGIGVILLIAFLFKIVSWL. Residues 976-982 lie on the Cytoplasmic side of the membrane; the sequence is PGKKKRN. The Endoplasmic reticulum retention signal signature appears at 978–980; that stretch reads KKK.

The mature envelope protein consists of a trimer of SU-TM heterodimers. The N-terminus of leader peptide specifically interacts with Gag protein. This specific interaction between Gag protein and Env glycoprotein may allow particle egress. Post-translationally, envelope glycoproteins are synthesized as an inactive precursor that is processed by host furin or a furin-like protease to yield a functional hetero-oligomeric complex. The transmembrane protein and the surface protein are N-glycosylated. In terms of processing, mono- and polyubiquitinated leader peptide are found in viral particles. Ubiquitination may be involved in regulating the balance between viral and subviral particles release.

Its subcellular location is the host endoplasmic reticulum membrane. The protein localises to the virion membrane. The surface protein (SU) attaches the virus to the host cell by binding to the cell receptor. This interaction triggers the refolding of TM and is thought to activate its fusogenic potential by unmasking its fusion peptide. Its function is as follows. The transmembrane protein (TM) acts as a class I viral fusion protein. Under the current model, the protein has at least 3 conformational states: pre-fusion native state, pre-hairpin intermediate state, and post-fusion hairpin state. During viral and target cell membrane fusion, the coiled coil regions (heptad repeats) assume a trimer-of-hairpins structure, positioning the fusion peptide in close proximity to the C-terminal region of the ectodomain. The formation of this structure appears to drive apposition and subsequent fusion of viral and target cell membranes. Membranes fusion leads to delivery of the nucleocapsid into the cytoplasm. In terms of biological role, the leader peptide is a component of released, infectious virions and is required for particle budding. The protein is Envelope glycoprotein gp130 (env) of Simian foamy virus type 3 (strain LK3) (SFVagm).